The following is a 564-amino-acid chain: Potassium-transporting ATPase potassium-binding subunit (564 aa).

The next 10 helical transmembrane spans lie at 4–24 (YDFALLLAFFVIVLLPAPWLG), 67–87 (TLALLAFNLVGFLLLFAVLLL), 135–155 (LGLTVQNFVSPATGLAVLVVL), 179–199 (LYGLLPLCLLLALLLVWQGVP), 258–278 (FEVASIILIPVALVFTFGHYV), 286–306 (AILACMLALFLIGGSTALWSE), 382–402 (AGLYGMLLFVLIAVFLAGLMI), 420–440 (LLVATLLVMPVGVLVLGAIAA), 487–507 (LMIGLAMLIGRFGYILPILAL), and 533–553 (GLLLVTILLVGGLTFLPTLAL).

Belongs to the KdpA family. The system is composed of three essential subunits: KdpA, KdpB and KdpC.

It localises to the cell inner membrane. Its function is as follows. Part of the high-affinity ATP-driven potassium transport (or Kdp) system, which catalyzes the hydrolysis of ATP coupled with the electrogenic transport of potassium into the cytoplasm. This subunit binds the periplasmic potassium ions and delivers the ions to the membrane domain of KdpB through an intramembrane tunnel. In Pseudomonas putida (strain ATCC 47054 / DSM 6125 / CFBP 8728 / NCIMB 11950 / KT2440), this protein is Potassium-transporting ATPase potassium-binding subunit.